The following is a 77-amino-acid chain: Large ribosomal subunit protein eL14 (77 aa).

It belongs to the eukaryotic ribosomal protein eL14 family.

This Methanococcus vannielii (strain ATCC 35089 / DSM 1224 / JCM 13029 / OCM 148 / SB) protein is Large ribosomal subunit protein eL14.